The sequence spans 285 residues: HTH-type transcriptional regulator MurR (285 aa).

Residues 1-77 (MLYLTKIRNA…MALIGEYSAS (77 aa)) form the HTH rpiR-type domain. A DNA-binding region (H-T-H motif) is located at residues 37 to 56 (SRQMAKQLGISQSSIVKFAQ). The SIS domain occupies 128 to 268 (IIEVISKAPF…FVGLVQLNDV (141 aa)).

Homotetramer.

Its pathway is amino-sugar metabolism; N-acetylmuramate degradation [regulation]. Represses the expression of the murPQ operon involved in the uptake and degradation of N-acetylmuramic acid (MurNAc). Binds to two adjacent inverted repeats within the operator region. MurNAc 6-phosphate, the substrate of MurQ, is the specific inducer that weakens binding of MurR to the operator. This is HTH-type transcriptional regulator MurR from Escherichia coli (strain ATCC 8739 / DSM 1576 / NBRC 3972 / NCIMB 8545 / WDCM 00012 / Crooks).